The sequence spans 458 residues: Ribosomal protein uS12 methylthiotransferase RimO (458 aa).

Positions 26 to 136 (PRIGMVSLGC…VLDAVHGAVP (111 aa)) constitute an MTTase N-terminal domain. Positions 35, 71, 100, 167, 171, and 174 each coordinate [4Fe-4S] cluster. Residues 153-389 (LTPRHYAYLK…MEKAQAISEA (237 aa)) enclose the Radical SAM core domain. A TRAM domain is found at 392–458 (QAKVGRTMQV…SEYDLWGKLT (67 aa)).

The protein belongs to the methylthiotransferase family. RimO subfamily. It depends on [4Fe-4S] cluster as a cofactor.

Its subcellular location is the cytoplasm. The enzyme catalyses L-aspartate(89)-[ribosomal protein uS12]-hydrogen + (sulfur carrier)-SH + AH2 + 2 S-adenosyl-L-methionine = 3-methylsulfanyl-L-aspartate(89)-[ribosomal protein uS12]-hydrogen + (sulfur carrier)-H + 5'-deoxyadenosine + L-methionine + A + S-adenosyl-L-homocysteine + 2 H(+). Functionally, catalyzes the methylthiolation of an aspartic acid residue of ribosomal protein uS12. The sequence is that of Ribosomal protein uS12 methylthiotransferase RimO from Jannaschia sp. (strain CCS1).